A 474-amino-acid chain; its full sequence is Coiled-coil domain-containing protein 6 (474 aa).

Over residues 1-10 the composition is skewed to acidic residues; the sequence is MADSASESDT. Residues 1–47 are disordered; the sequence is MADSASESDTDGAGGNSSSSAAMQSSCSSTSGGGGGGGGGGGGGKSG. Ala-2 carries the post-translational modification N-acetylalanine. Over residues 16 to 30 the composition is skewed to low complexity; the sequence is NSSSSAAMQSSCSST. Over residues 31 to 47 the composition is skewed to gly residues; the sequence is SGGGGGGGGGGGGGKSG. Residue Ser-52 is modified to Phosphoserine. Residues 53 to 237 adopt a coiled-coil conformation; it reads PFRLEELTNR…KRILQEKLDQ (185 aa). Tandem repeats lie at residues 106 to 134, 135 to 163, and 164 to 192. Residues 106 to 235 are 5 X 29 AA tandem repeats; it reads EQEEEFISNT…AEKRILQEKL (130 aa). Residues 193–206 form a 4; approximate repeat; that stretch reads EQLRREKIDLENTL. Repeat unit 5 spans residues 207-235; that stretch reads EQEQEALVNRLWKRMDKLEAEKRILQEKL. Phosphoserine is present on residues Ser-240, Ser-244, Ser-249, Ser-254, Ser-284, and Ser-323. Residues 253 to 332 are a coiled coil; sequence DSPENMMRHI…SESESSLEMD (80 aa). A disordered region spans residues 342 to 369; the sequence is AQGLRPRTVSSPIPYTPSPSSSRPISPG. Thr-349 carries the phosphothreonine modification. Residues 351 to 368 show a composition bias toward low complexity; the sequence is SSPIPYTPSPSSSRPISP. 2 positions are modified to phosphoserine: Ser-363 and Ser-367. Arg-387 bears the Omega-N-methylarginine mark. 2 positions are modified to phosphoserine: Ser-395 and Ser-413. The segment at 397-474 is disordered; that stretch reads GLHVQHMGTS…QHSAHPSSQP (78 aa). Over residues 426 to 451 the composition is skewed to pro residues; sequence PTPPPSPNTQTPVQPPPPPPPPPMQP. The SH3-binding motif lies at 442 to 451; the sequence is PPPPPPPMQP. Over residues 459–474 the composition is skewed to low complexity; sequence SQPTPSQHSAHPSSQP.

As to expression, ubiquitously expressed.

It localises to the cytoplasm. The protein resides in the cytoskeleton. This is Coiled-coil domain-containing protein 6 (CCDC6) from Homo sapiens (Human).